The following is a 439-amino-acid chain: ATP-dependent RNA helicase SUB2 (439 aa).

The span at Met-1–Ile-19 shows a compositional bias: acidic residues. The tract at residues Met-1–Ser-48 is disordered. The span at Glu-29–Asn-40 shows a compositional bias: polar residues. The Q motif motif lies at Thr-55–Gln-83. The region spanning Ile-86–Ile-261 is the Helicase ATP-binding domain. Ala-99–Thr-106 is a binding site for ATP. The DECD box motif lies at Asp-208–Asp-211. Residues Gly-273–Ser-434 form the Helicase C-terminal domain.

It belongs to the DEAD box helicase family. DECD subfamily.

Its subcellular location is the nucleus. It carries out the reaction ATP + H2O = ADP + phosphate + H(+). In terms of biological role, ATP-binding RNA helicase involved in transcription elongation and required for the export of mRNA out of the nucleus. SUB2 also plays a role in pre-mRNA splicing and spliceosome assembly. May be involved in rDNA and telomeric silencing, and maintenance of genome integrity. This Candida glabrata (strain ATCC 2001 / BCRC 20586 / JCM 3761 / NBRC 0622 / NRRL Y-65 / CBS 138) (Yeast) protein is ATP-dependent RNA helicase SUB2 (SUB2).